The chain runs to 70 residues: MAHPKAAEVRKLTDADITEQIDGIRRELFDLRFQQATRQLSNTHRFKEARIKLAQLLTVQKERSRSAASS.

Belongs to the universal ribosomal protein uL29 family.

In Prochlorococcus marinus (strain MIT 9313), this protein is Large ribosomal subunit protein uL29.